The chain runs to 761 residues: Phosphoribosylformylglycinamidine synthase subunit PurL (761 aa).

Residue His58 is part of the active site. Residues Tyr61 and Lys105 each coordinate ATP. Glu107 provides a ligand contact to Mg(2+). Substrate is bound by residues 108-111 (SHNH) and Arg130. His109 (proton acceptor) is an active-site residue. Residue Asp131 coordinates Mg(2+). Position 259 (Gln259) interacts with substrate. Asp287 contacts Mg(2+). 331-333 (ESQ) is a substrate binding site. Positions 519 and 556 each coordinate ATP. Residue Asn557 participates in Mg(2+) binding. Ser559 provides a ligand contact to substrate.

This sequence belongs to the FGAMS family. Monomer. Part of the FGAM synthase complex composed of 1 PurL, 1 PurQ and 2 PurS subunits.

Its subcellular location is the cytoplasm. The enzyme catalyses N(2)-formyl-N(1)-(5-phospho-beta-D-ribosyl)glycinamide + L-glutamine + ATP + H2O = 2-formamido-N(1)-(5-O-phospho-beta-D-ribosyl)acetamidine + L-glutamate + ADP + phosphate + H(+). It participates in purine metabolism; IMP biosynthesis via de novo pathway; 5-amino-1-(5-phospho-D-ribosyl)imidazole from N(2)-formyl-N(1)-(5-phospho-D-ribosyl)glycinamide: step 1/2. Its function is as follows. Part of the phosphoribosylformylglycinamidine synthase complex involved in the purines biosynthetic pathway. Catalyzes the ATP-dependent conversion of formylglycinamide ribonucleotide (FGAR) and glutamine to yield formylglycinamidine ribonucleotide (FGAM) and glutamate. The FGAM synthase complex is composed of three subunits. PurQ produces an ammonia molecule by converting glutamine to glutamate. PurL transfers the ammonia molecule to FGAR to form FGAM in an ATP-dependent manner. PurS interacts with PurQ and PurL and is thought to assist in the transfer of the ammonia molecule from PurQ to PurL. This Rhodococcus jostii (strain RHA1) protein is Phosphoribosylformylglycinamidine synthase subunit PurL.